A 376-amino-acid chain; its full sequence is Multiphosphoryl transfer protein (376 aa).

Positions 2–142 constitute a PTS EIIA type-2 domain; it reads FQLSVQDIHP…EELRALLMGE (141 aa). The active-site Tele-phosphohistidine intermediate; for EIIA activity is the histidine 62. At histidine 62 the chain carries Phosphohistidine; by HPr. The interval 156–284 is m domain; it reads TLDVIASSLV…LTSDDALTDD (129 aa). An HPr domain is found at 285–375; sequence VLSAEFVVRN…DAIAAGLGEG (91 aa). The active-site Pros-phosphohistidine intermediate; for HPr activity is the histidine 299. A Phosphohistidine; by EI modification is found at histidine 299.

It localises to the cytoplasm. The phosphoenolpyruvate-dependent sugar phosphotransferase system (sugar PTS), a major carbohydrate active transport system, catalyzes the phosphorylation of incoming sugar substrates concomitantly with their translocation across the cell membrane. The enzyme II FruAB PTS system is involved in fructose transport. The polypeptide is Multiphosphoryl transfer protein (fruB) (Salmonella typhimurium (strain LT2 / SGSC1412 / ATCC 700720)).